Reading from the N-terminus, the 226-residue chain is Enolase-phosphatase E1 (226 aa).

Belongs to the HAD-like hydrolase superfamily. MasA/MtnC family. In terms of assembly, monomer. Mg(2+) serves as cofactor.

The catalysed reaction is 5-methylsulfanyl-2,3-dioxopentyl phosphate + H2O = 1,2-dihydroxy-5-(methylsulfanyl)pent-1-en-3-one + phosphate. It participates in amino-acid biosynthesis; L-methionine biosynthesis via salvage pathway; L-methionine from S-methyl-5-thio-alpha-D-ribose 1-phosphate: step 3/6. Its pathway is amino-acid biosynthesis; L-methionine biosynthesis via salvage pathway; L-methionine from S-methyl-5-thio-alpha-D-ribose 1-phosphate: step 4/6. Bifunctional enzyme that catalyzes the enolization of 2,3-diketo-5-methylthiopentyl-1-phosphate (DK-MTP-1-P) into the intermediate 2-hydroxy-3-keto-5-methylthiopentenyl-1-phosphate (HK-MTPenyl-1-P), which is then dephosphorylated to form the acireductone 1,2-dihydroxy-3-keto-5-methylthiopentene (DHK-MTPene). The polypeptide is Enolase-phosphatase E1 (Shewanella oneidensis (strain ATCC 700550 / JCM 31522 / CIP 106686 / LMG 19005 / NCIMB 14063 / MR-1)).